The chain runs to 901 residues: Protein translocase subunit SecA (901 aa).

Residues glutamine 87, 105–109, and aspartate 512 contribute to the ATP site; that span reads GEGKT. Zn(2+) is bound by residues cysteine 885, cysteine 887, cysteine 896, and histidine 897.

The protein belongs to the SecA family. In terms of assembly, monomer and homodimer. Part of the essential Sec protein translocation apparatus which comprises SecA, SecYEG and auxiliary proteins SecDF-YajC and YidC. Zn(2+) is required as a cofactor.

The protein localises to the cell inner membrane. It is found in the cytoplasm. The catalysed reaction is ATP + H2O + cellular proteinSide 1 = ADP + phosphate + cellular proteinSide 2.. Its function is as follows. Part of the Sec protein translocase complex. Interacts with the SecYEG preprotein conducting channel. Has a central role in coupling the hydrolysis of ATP to the transfer of proteins into and across the cell membrane, serving both as a receptor for the preprotein-SecB complex and as an ATP-driven molecular motor driving the stepwise translocation of polypeptide chains across the membrane. The chain is Protein translocase subunit SecA from Salmonella enteritidis PT4 (strain P125109).